The chain runs to 330 residues: D-alanine--D-alanine ligase (330 aa).

In terms of domain architecture, ATP-grasp spans 121 to 321 (NHYLKDFGVK…IKDVMTDIIE (201 aa)). ATP is bound at residue 149–204 (VTRLGLPIFVKPNDGGSSFGVTKVKEVSAIQPAIAKAFGEGREVILERFIDGTEVT). Mg(2+) is bound by residues aspartate 275, glutamate 288, and asparagine 290.

It belongs to the D-alanine--D-alanine ligase family. It depends on Mg(2+) as a cofactor. The cofactor is Mn(2+).

Its subcellular location is the cytoplasm. It carries out the reaction 2 D-alanine + ATP = D-alanyl-D-alanine + ADP + phosphate + H(+). It functions in the pathway cell wall biogenesis; peptidoglycan biosynthesis. Cell wall formation. This Parabacteroides distasonis (strain ATCC 8503 / DSM 20701 / CIP 104284 / JCM 5825 / NCTC 11152) protein is D-alanine--D-alanine ligase.